Here is a 1198-residue protein sequence, read N- to C-terminus: MAEHPPLLDTAQILSSDISLLSAPIVSADGTQQVILVQVNPGEAFTIRREDGQFQCITGPAQVPMMSPNGSVPPIYVPPGYAPQVIEDNGVRRVVVVPQSPEFHPGGHTVIHRSPHPPLPGFIPVPTMMPPPPRHMYSPVTGAGDMATQYMPQYQSSQVYADVDAHSTHGRSNFRDERSSKTYERLQKKLKDRQGTQKDKMSSPPPSPQKCPSPISEHNGLIKGQNASGGNTGSARNRSGRGRSCTQVDPEMEEKDEETKAFEAFLSNIVKPVASDIQARTVLLTWSPPSSFINGEVNETAVPELFNYEVLVSSTGKEGKYRSVYIGEETSVTLNDLKPATDYHAKVQAESNSIKGIPSEAESFTTLSCEPDPPNAPRIANRTKNSLTLQWKAPSDNGSKIQSFILEWDEGKGNGEFCQCYMGSQKQFKITKLSPAMGCKFRLSAKNDYGVSDFSEEVLYYTSGCAPSVPASPVLTKAGVTWLSLQWTKPSGTPSDEGISYILEMEEETSGYGFKPKYDGEDLAYTVKNLRRSTKYKFKVIAYNSEGKSNPSEVVEFSTCPDKPGVPVKPSVKGKIHSHGFKITWDPPKDNGGAPINKYVVEMAEGSNGNKWDMIYSGTTREHLCDRLTPGCYYRLRVYCISDGGQSAVSESLLVQTPAVPPGPCLPPRLQGRPKAKEIQLRWGPPQVDGGSPISCYAVEMTPADKDEPRDVYQGSEVECTVGSLLPGKTYSFRLRAANRIGFGPFSEKYDITTAPGPPDQCRPPQVTCRSATCAQVNWEIPLSNGTDVTEYRLEWGGVEGSMQMCYCGPGLSCELKGLSPATTYYCRVQAMSVVGAGPFSEVVACVTPPSVPAIVTCLQEISDDDIEYPHYSPSTCLAISWKEPYDHGSEILAYSIDLGDKQPLTVGKMTSYIIDSLQPDTTYRIRIQALNSLGAGPFSHTIKLKTKPLPPDPPRLECVAFNHQNLKLKWGEGTPKTLSTDAVQYHLQMEDRNGRFVSLYRGPCHTYKVQRLSESTSYKFCIQACNEAGEGPLSQEYVFTTPKSLPAALKAPKIEKINDHICEITWEYLQPMKGDPVIYNLQVMVGKDSEFKQIYKGPDTSFRYSSLQLNCEYRFRVCAIRQCQDPTGHQDLVGPYSTTVFFISQRTEPPASSNKDSVDSARTRRTLSDEQCAAVILVVFAFFSILIAFIIQYFVIK.

A compositionally biased stretch (basic and acidic residues) spans 188–201 (KKLKDRQGTQKDKM). The segment at 188 to 257 (KKLKDRQGTQ…VDPEMEEKDE (70 aa)) is disordered. 3 positions are modified to phosphoserine: Ser203, Ser207, and Ser213. Fibronectin type-III domains lie at 268–369 (NIVK…TLSC), 373–465 (PPNA…TSGC), 469–562 (VPAS…TCPD), 566–660 (VPVK…TPAV), 664–757 (PCLP…TAPG), 761–851 (QCRP…TPPS), 863–950 (SDDD…TKPL), 951–1045 (PPDP…TPKS), and 1049–1151 (ALKA…TEPP). An N6-acetyllysine modification is found at Lys384. A helical membrane pass occupies residues 1177–1197 (ILVVFAFFSILIAFIIQYFVI).

The protein belongs to the FNDC3 family. As to expression, testis. Localizes to the acrosome of spermatids, as well as to Leydig cells. Can be detected on the acrosome beginning at steps 2-3 and continuing until step 12 of spermiogenesis.

It is found in the golgi apparatus membrane. Mediates spermatid-Sertoli adhesion during spermatogenesis. The sequence is that of Fibronectin type-III domain-containing protein 3A (Fndc3a) from Mus musculus (Mouse).